A 271-amino-acid chain; its full sequence is MSQGYLPFPNIDPVFFSIGPISVRWYGLMYLFGFLFAMWLANRRADKPGSGWTREQVSDLLFAGFLGVVLGGRIGYVLFYNFDLFLADPIYLFKVWTGGMSFHGGLLGVITAMLWYAKKNGRTFFGVADFVAPLVPFGLGVGRLGNFMNGELWGRVTDVPWAMVFPTGGPLPRHPSQLYEMALEGVLLFFILNWFIRKPRPLGSVSGLFLAGYGTFRFLVEYVREPDAQLGLFGGFISMGQILSSPMIIGGLALMAWAYKRGHYQDKVTVK.

Helical transmembrane passes span 21–41, 60–80, 95–115, 124–144, 176–196, 203–223, and 230–250; these read ISVR…MWLA, LLFA…VLFY, VWTG…AMLW, FFGV…VGRL, SQLY…NWFI, GSVS…VEYV, and LGLF…MIIG. Arg143 serves as a coordination point for a 1,2-diacyl-sn-glycero-3-phospho-(1'-sn-glycerol).

Belongs to the Lgt family.

It localises to the cell inner membrane. The enzyme catalyses L-cysteinyl-[prolipoprotein] + a 1,2-diacyl-sn-glycero-3-phospho-(1'-sn-glycerol) = an S-1,2-diacyl-sn-glyceryl-L-cysteinyl-[prolipoprotein] + sn-glycerol 1-phosphate + H(+). The protein operates within protein modification; lipoprotein biosynthesis (diacylglyceryl transfer). Functionally, catalyzes the transfer of the diacylglyceryl group from phosphatidylglycerol to the sulfhydryl group of the N-terminal cysteine of a prolipoprotein, the first step in the formation of mature lipoproteins. The sequence is that of Phosphatidylglycerol--prolipoprotein diacylglyceryl transferase from Vibrio vulnificus (strain YJ016).